A 303-amino-acid polypeptide reads, in one-letter code: Acetylglutamate kinase (303 aa).

Residues 76–77, R98, and N192 contribute to the substrate site; that span reads GG.

Belongs to the acetylglutamate kinase family. ArgB subfamily.

It is found in the cytoplasm. The catalysed reaction is N-acetyl-L-glutamate + ATP = N-acetyl-L-glutamyl 5-phosphate + ADP. The protein operates within amino-acid biosynthesis; L-arginine biosynthesis; N(2)-acetyl-L-ornithine from L-glutamate: step 2/4. Its function is as follows. Catalyzes the ATP-dependent phosphorylation of N-acetyl-L-glutamate. This Chlorobium phaeobacteroides (strain DSM 266 / SMG 266 / 2430) protein is Acetylglutamate kinase.